Consider the following 185-residue polypeptide: Tetratricopeptide repeat protein 36 homolog (185 aa).

3 TPR repeats span residues 53–86 (SREL…AQRA), 88–119 (VLNN…ASDQ), and 125–158 (CHAH…GSKF).

Belongs to the TTC36 family.

The polypeptide is Tetratricopeptide repeat protein 36 homolog (Drosophila pseudoobscura pseudoobscura (Fruit fly)).